We begin with the raw amino-acid sequence, 373 residues long: 3 beta-hydroxysteroid dehydrogenase/Delta 5--&gt;4-isomerase type 4 (373 aa).

Y155 functions as the Proton acceptor in the catalytic mechanism. Residue K159 participates in NAD(+) binding. Residues 288 to 308 form a helical membrane-spanning segment; sequence LPLLYWLAFLLEIVSFFLHPV. K350 is subject to N6-acetyllysine.

It belongs to the 3-beta-HSD family. In terms of tissue distribution, skin, placenta, also detectable in ovary and adrenal gland.

It is found in the endoplasmic reticulum membrane. It localises to the mitochondrion membrane. The catalysed reaction is a 3beta-hydroxy-Delta(5)-steroid + NAD(+) = a 3-oxo-Delta(5)-steroid + NADH + H(+). It catalyses the reaction a 3-oxo-Delta(5)-steroid = a 3-oxo-Delta(4)-steroid. It participates in lipid metabolism; steroid biosynthesis. 3-beta-HSD is a bifunctional enzyme, that catalyzes the oxidative conversion of Delta(5)-ene-3-beta-hydroxy steroid, and the oxidative conversion of ketosteroids. The 3-beta-HSD enzymatic system plays a crucial role in the biosynthesis of all classes of hormonal steroids. This is 3 beta-hydroxysteroid dehydrogenase/Delta 5--&gt;4-isomerase type 4 (Hsd3b6) from Rattus norvegicus (Rat).